The primary structure comprises 1413 residues: DNA-directed RNA polymerase subunit beta' (1413 aa).

Residues cysteine 70, cysteine 72, cysteine 85, and cysteine 88 each contribute to the Zn(2+) site. Aspartate 460, aspartate 462, and aspartate 464 together coordinate Mg(2+). Positions 819, 893, 900, and 903 each coordinate Zn(2+). Positions 1393–1413 (EAFEFGTPETPAAEQTPHTNE) are disordered.

The protein belongs to the RNA polymerase beta' chain family. In terms of assembly, the RNAP catalytic core consists of 2 alpha, 1 beta, 1 beta' and 1 omega subunit. When a sigma factor is associated with the core the holoenzyme is formed, which can initiate transcription. Requires Mg(2+) as cofactor. It depends on Zn(2+) as a cofactor.

It carries out the reaction RNA(n) + a ribonucleoside 5'-triphosphate = RNA(n+1) + diphosphate. Functionally, DNA-dependent RNA polymerase catalyzes the transcription of DNA into RNA using the four ribonucleoside triphosphates as substrates. This chain is DNA-directed RNA polymerase subunit beta', found in Paraburkholderia phymatum (strain DSM 17167 / CIP 108236 / LMG 21445 / STM815) (Burkholderia phymatum).